Consider the following 322-residue polypeptide: Prephenate dehydratase (322 aa).

In terms of domain architecture, Prephenate dehydratase spans 5–191 (RIAYLGPEGT…ARTRFVLVGM (187 aa)). The ACT domain maps to 205 to 282 (SAVLRIDNAP…ADVCYLGSWP (78 aa)). The disordered stretch occupies residues 286-322 (ATGPTVSPPPPDEASRWLARLRAGKPDQASEPGGGKL).

As to quaternary structure, homodimer.

It carries out the reaction prephenate + H(+) = 3-phenylpyruvate + CO2 + H2O. Its pathway is amino-acid biosynthesis; L-phenylalanine biosynthesis; phenylpyruvate from prephenate: step 1/1. The polypeptide is Prephenate dehydratase (pheA) (Mycobacterium leprae (strain Br4923)).